The chain runs to 213 residues: Thymidylate kinase (213 aa).

10–17 (GLEGAGKT) is an ATP binding site.

The protein belongs to the thymidylate kinase family.

It catalyses the reaction dTMP + ATP = dTDP + ADP. In terms of biological role, phosphorylation of dTMP to form dTDP in both de novo and salvage pathways of dTTP synthesis. The chain is Thymidylate kinase from Klebsiella pneumoniae subsp. pneumoniae (strain ATCC 700721 / MGH 78578).